The sequence spans 123 residues: UPF0102 protein CLK_1817 (123 aa).

The protein belongs to the UPF0102 family.

The polypeptide is UPF0102 protein CLK_1817 (Clostridium botulinum (strain Loch Maree / Type A3)).